Reading from the N-terminus, the 905-residue chain is DNA mismatch repair protein MutS (905 aa).

Residues 1 to 95 form a disordered region; it reads MELSLQGSLF…PAWGHHSQLK (95 aa). Positions 38–50 are enriched in basic and acidic residues; the sequence is NLSDADLSKDALA. 721-728 lines the ATP pocket; that stretch reads GPNASGKS.

Belongs to the DNA mismatch repair MutS family.

Its function is as follows. This protein is involved in the repair of mismatches in DNA. It is possible that it carries out the mismatch recognition step. This protein has a weak ATPase activity. The protein is DNA mismatch repair protein MutS of Synechococcus sp. (strain CC9902).